A 117-amino-acid chain; its full sequence is Large ribosomal subunit protein bL20 (117 aa).

It belongs to the bacterial ribosomal protein bL20 family.

Functionally, binds directly to 23S ribosomal RNA and is necessary for the in vitro assembly process of the 50S ribosomal subunit. It is not involved in the protein synthesizing functions of that subunit. The sequence is that of Large ribosomal subunit protein bL20 from Limosilactobacillus reuteri (strain DSM 20016) (Lactobacillus reuteri).